Consider the following 28-residue polypeptide: Putative antitoxin AF_1079 (28 aa).

Belongs to the UPF0165 family.

In terms of biological role, possibly the antitoxin component of a type II toxin-antitoxin (TA) system. This Archaeoglobus fulgidus (strain ATCC 49558 / DSM 4304 / JCM 9628 / NBRC 100126 / VC-16) protein is Putative antitoxin AF_1079.